The chain runs to 223 residues: Ras-related protein RABA4c (223 aa).

Residue G22–S29 participates in GTP binding. Positions S44 to F52 match the Effector region motif. GTP is bound by residues D70–Q74, N128–D131, and S158–A159. 2 S-geranylgeranyl cysteine lipidation sites follow: C219 and C220.

This sequence belongs to the small GTPase superfamily. Rab family.

Its subcellular location is the cell membrane. Functionally, intracellular vesicle trafficking and protein transport. This Arabidopsis thaliana (Mouse-ear cress) protein is Ras-related protein RABA4c (RABA4C).